Consider the following 129-residue polypeptide: Lysozyme C-2 (129 aa).

The C-type lysozyme domain occupies 1-129; sequence KVFERCELAR…VSSYVEGCTL (129 aa). Intrachain disulfides connect C6–C127, C30–C115, C65–C81, and C77–C95. Active-site residues include E35 and D53.

Belongs to the glycosyl hydrolase 22 family. In terms of assembly, monomer.

The enzyme catalyses Hydrolysis of (1-&gt;4)-beta-linkages between N-acetylmuramic acid and N-acetyl-D-glucosamine residues in a peptidoglycan and between N-acetyl-D-glucosamine residues in chitodextrins.. In terms of biological role, lysozymes have primarily a bacteriolytic function; those in tissues and body fluids are associated with the monocyte-macrophage system and enhance the activity of immunoagents. This chain is Lysozyme C-2, found in Capra hircus (Goat).